Here is a 190-residue protein sequence, read N- to C-terminus: Peptidyl-tRNA hydrolase (190 aa).

Tyr18 lines the tRNA pocket. The active-site Proton acceptor is the His23. 3 residues coordinate tRNA: Phe69, Asn71, and Asn117.

Belongs to the PTH family. In terms of assembly, monomer.

The protein resides in the cytoplasm. The enzyme catalyses an N-acyl-L-alpha-aminoacyl-tRNA + H2O = an N-acyl-L-amino acid + a tRNA + H(+). Hydrolyzes ribosome-free peptidyl-tRNAs (with 1 or more amino acids incorporated), which drop off the ribosome during protein synthesis, or as a result of ribosome stalling. Functionally, catalyzes the release of premature peptidyl moieties from peptidyl-tRNA molecules trapped in stalled 50S ribosomal subunits, and thus maintains levels of free tRNAs and 50S ribosomes. The chain is Peptidyl-tRNA hydrolase from Rhodococcus opacus (strain B4).